The sequence spans 331 residues: C-type lectin domain family 4 member K (331 aa).

Residues 1-41 (MPEAEMKEEAPEAHFTVDKQNISLWPREPPPKQDLSPVLRK) lie on the Cytoplasmic side of the membrane. A helical; Signal-anchor for type II membrane protein membrane pass occupies residues 42-62 (PLCICVAFTCLALVLVTSIVL). Residues 63–331 (QAVFYPRLMG…CKRPYVQTTE (269 aa)) lie on the Extracellular side of the membrane. Residues Asn90 and Asn116 are each glycosylated (N-linked (GlcNAc...) asparagine). The stretch at 106–197 (DDAEVQMQIV…LKQQSDILEM (92 aa)) forms a coiled coil. The 119-residue stretch at 205–323 (FSGNFYYFSR…CDNTFLFICK (119 aa)) folds into the C-type lectin domain. Disulfide bonds link Cys226–Cys322 and Cys298–Cys314.

In terms of assembly, homotrimer. In terms of tissue distribution, expressed by Langerhans cells. Expressed in dendritic cells and by scattered cells in lymph nodes and spleen. Also detected in some non-lymphoid tissues such as lung, liver and heart.

The protein localises to the membrane. In terms of biological role, calcium-dependent lectin displaying mannose-binding specificity. Induces the formation of Birbeck granules (BGs); is a potent regulator of membrane superimposition and zippering. Binds to sulfated as well as mannosylated glycans, keratan sulfate (KS) and beta-glucans. Facilitates uptake of antigens and is involved in the routing and/or processing of antigen for presentation to T cells. The sequence is that of C-type lectin domain family 4 member K (Cd207) from Mus musculus (Mouse).